The following is a 111-amino-acid chain: Cytochrome c (111 aa).

At alanine 1 the chain carries N-acetylalanine. Positions 22, 25, and 26 each coordinate heme c. An N6,N6,N6-trimethyllysine modification is found at lysine 80. Methionine 88 serves as a coordination point for heme c. Lysine 94 carries the N6,N6,N6-trimethyllysine modification.

The protein belongs to the cytochrome c family. Binds 1 heme c group covalently per subunit.

The protein localises to the mitochondrion intermembrane space. Electron carrier protein. The oxidized form of the cytochrome c heme group can accept an electron from the heme group of the cytochrome c1 subunit of cytochrome reductase. Cytochrome c then transfers this electron to the cytochrome oxidase complex, the final protein carrier in the mitochondrial electron-transport chain. This is Cytochrome c from Sesamum indicum (Oriental sesame).